The following is a 137-amino-acid chain: Small ribosomal subunit protein bS16 (137 aa).

It belongs to the bacterial ribosomal protein bS16 family.

The protein is Small ribosomal subunit protein bS16 of Leuconostoc citreum (strain KM20).